The primary structure comprises 161 residues: S-ribosylhomocysteine lyase (161 aa).

Fe cation is bound by residues His57, His61, and Cys124.

The protein belongs to the LuxS family. Homodimer. Fe cation serves as cofactor.

It carries out the reaction S-(5-deoxy-D-ribos-5-yl)-L-homocysteine = (S)-4,5-dihydroxypentane-2,3-dione + L-homocysteine. Functionally, involved in the synthesis of autoinducer 2 (AI-2) which is secreted by bacteria and is used to communicate both the cell density and the metabolic potential of the environment. The regulation of gene expression in response to changes in cell density is called quorum sensing. Catalyzes the transformation of S-ribosylhomocysteine (RHC) to homocysteine (HC) and 4,5-dihydroxy-2,3-pentadione (DPD). The chain is S-ribosylhomocysteine lyase from Macrococcus caseolyticus (strain JCSC5402) (Macrococcoides caseolyticum).